A 1273-amino-acid chain; its full sequence is Paired amphipathic helix protein Sin3a (1273 aa).

Disordered regions lie at residues 1 to 23 and 87 to 110; these read MKRRLDDQESPVYAAQQRRIPGS and HPTAVQPHGGQVVQSHAHPAPPVA. A Phosphoserine modification is found at Ser10. The 71-residue stretch at 119-189 folds into the PAH 1 domain; it reads QRLKVEDALS…MGFNTFLPPG (71 aa). Positions 119-196 are interaction with HCFC1; that stretch reads QRLKVEDALS…PPGYKIEVQT (78 aa). Glycyl lysine isopeptide (Lys-Gly) (interchain with G-Cter in SUMO2) cross-links involve residues Lys122 and Lys134. Positions 205–297 are disordered; that stretch reads PGQVHQIPTH…ISLGTAPSLQ (93 aa). The tract at residues 205-480 is interaction with REST; the sequence is PGQVHQIPTH…RKALRSAEAY (276 aa). The span at 228 to 237 shows a compositional bias: low complexity; it reads SQPSAQSAPA. The segment covering 238 to 248 has biased composition (pro residues); that stretch reads PAQPAPQPPPA. Residues 252-266 are compositionally biased toward polar residues; it reads KPSQLQAHTPASQQT. The span at 267 to 282 shows a compositional bias: pro residues; sequence PPLPPYASPRSPPVQP. Ser277 is subject to Phosphoserine. Thr284 carries the post-translational modification Phosphothreonine. The span at 284–297 shows a compositional bias: polar residues; sequence TPVTISLGTAPSLQ. One can recognise a PAH 2 domain in the interval 300–383; the sequence is QPVEFNHAIN…SEFGQFLPDA (84 aa). The segment at 398–446 is disordered; that stretch reads DSVRNDHGGTVKKPQLNNKPQRPSQNGCQIRRHPTGTTPPVKKKPKLLN. The span at 412-425 shows a compositional bias: polar residues; the sequence is QLNNKPQRPSQNGC. The 70-residue stretch at 456-525 folds into the PAH 3 domain; sequence SKHGGGTESL…NWFKNFLGYK (70 aa). The interval 458–525 is interaction with SAP30; sequence HGGGTESLFF…NWFKNFLGYK (68 aa). The residue at position 469 (Lys469) is an N6-acetyllysine. An interaction with NCOR1 region spans residues 523–850; it reads GYKESVHLET…EMDVDEATGA (328 aa). An interaction with SUDS3 and SAP130 region spans residues 524-659; sequence YKESVHLETY…KFRLDNTLGG (136 aa). Lys563 is covalently cross-linked (Glycyl lysine isopeptide (Lys-Gly) (interchain with G-Cter in SUMO2)). The tract at residues 687–829 is interaction with HDAC1 and ARID4B; sequence NPSIAVPIVL…IPDLLFAQRG (143 aa). Phosphoserine occurs at positions 832 and 860. Lys865 and Lys875 each carry N6-acetyllysine. The segment at 888 to 967 is interaction with OGT; sequence VNNNWYIFMR…YYPAFLDMVR (80 aa). Positions 903 to 932 form a coiled coil; it reads CLRLLRICSQAERQIEEENREREWEREVLG. A phosphoserine mark is found at Ser940, Ser1089, and Ser1112. Positions 1136–1156 are disordered; sequence CQRGREQQEKEGKEGNSKKTM. The segment covering 1138 to 1156 has biased composition (basic and acidic residues); the sequence is RGREQQEKEGKEGNSKKTM.

As to quaternary structure, interacts with ARID4B, BRMS1L, HCFC1, HDAC1, HDAC2, MXI1, SAP30L, SAP130, SFPQ and TOPORS. Interacts with OGT (via TPRs 1-6); the interaction mediates transcriptional repression in parallel with histone deacetylase. Interacts with BAZ2A, MXD1, MXD3, MXD4, MBD2, DACH1, NCOR1, NR4A2, REST, RLIM, SAP30, SETDB1, SMYD2, and SUDS3. Interacts with PHF12 in a complex composed of HDAC1, PHF12 and SAP30. Interacts with TET1; the interaction recruits SIN3A to gene promoters. The large PER complex involved in the histone deacetylation is composed of at least HDAC1, PER2, SFPQ and SIN3A. Interacts with KLF11. Interacts with PPHLN1. Found in a complex with YY1, GON4L and HDAC1. Interacts (via PAH2) with FOXK1. Interacts with FOXK2. Found in a complex composed of at least SINHCAF, SIN3A, HDAC1, SAP30, RBBP4, OGT and TET1. Interacts with SINHCAF. Interacts with SPHK2. In terms of processing, SUMO1 sumoylated by TOPORS. Probably desumoylated by SENP2. As to expression, expressed in the developing brain, with highest levels of expression detected in the ventricular zone of various cortical regions.

It localises to the nucleus. It is found in the nucleolus. In terms of biological role, acts as a transcriptional repressor. Corepressor for REST. Interacts with MXI1 to repress MYC responsive genes and antagonize MYC oncogenic activities. Also interacts with MXD1-MAX heterodimers to repress transcription by tethering SIN3A to DNA. Acts cooperatively with OGT to repress transcription in parallel with histone deacetylation. Involved in the control of the circadian rhythms. Required for the transcriptional repression of circadian target genes, such as PER1, mediated by the large PER complex through histone deacetylation. Cooperates with FOXK1 to regulate cell cycle progression probably by repressing cell cycle inhibitor genes expression. Required for cortical neuron differentiation and callosal axon elongation. This chain is Paired amphipathic helix protein Sin3a, found in Homo sapiens (Human).